Reading from the N-terminus, the 1162-residue chain is Enhanced level of genomic instability 1 (1162 aa).

Disordered regions lie at residues 1 to 136, 144 to 163, 179 to 202, 249 to 319, 348 to 380, 611 to 634, and 666 to 697; these read MTDV…ADNQ, KAGK…KPKP, LGVN…ATPT, KTDA…TKKR, METP…RRSC, RSME…PNGE, and WSGN…SSSN. The span at 65 to 78 shows a compositional bias: basic residues; that stretch reads KQKHREKHKRKREE. The segment covering 79–111 has biased composition (basic and acidic residues); that stretch reads KRRAALMEDQKSTTEEVKANAKEKPQPLREKSS. A compositionally biased stretch (polar residues) spans 125–136; it reads PLKSSTPVADNQ. The segment covering 268–278 has biased composition (basic residues); it reads KRLRGRPRSRR. Composition is skewed to low complexity over residues 666–676 and 684–697; these read WSGNGGSNRNS and DMSN…SSSN. 703–710 contacts ATP; sequence GPSSSGKT. Disordered stretches follow at residues 900–923 and 975–1008; these read GDST…SRLA and QAAG…SDGH. Over residues 984–993 the composition is skewed to basic residues; sequence AAKRKSRSPK. The segment covering 998–1008 has biased composition (polar residues); the sequence is SSATGQKSDGH.

It belongs to the ELG1 family. In terms of assembly, component of a heteropentameric Elg1 RFC-like complex composed of one large subunit (elg1) and four small subunits (RfC4, RfC38, CG8142 and RfC3). As part of the complex, might interact with the Enok complex, composed of enok, Br140, Eaf6 and Ing5. Within the Enok complex, interacts directly with Br140. In terms of tissue distribution, expressed at higher levels in the germline nurse cells than in the somatic follicle cells.

It localises to the nucleus. Has an important role in DNA replication and in maintaining genome integrity during replication stress. Promotes PCNA deubiquitination. As component of the Elg1 RFC-like complex, regulates the functions of the DNA polymerase processivity factor PCNA by unloading it from DNA after replication during the S phase of the cell cycle. The PCNA-unloading might be regulated via interaction with the Enok acetyltransferase complex. Might have a role in restarting of stalled/regressed replication forks during replication stress. In the ovaries, has a role in nurse cell endoreplication. The chain is Enhanced level of genomic instability 1 from Drosophila melanogaster (Fruit fly).